The sequence spans 522 residues: MVDDKEKNMKCLTFFLMLPETVKNRSKKSSKKANTGSSSSNSSKLPPVCYEIITLKTKKKKMAADIFPRKKPANSSSTSVQQYHQQNLSNNNLIPAPNWQGLYPTIRERNAVMFNNDLMADVHFVVGPPGGTQRLPGHKYVLAVGSSVFHAMFYGELAEDKDEIRIPDVEPAAFLAMLKYIYCDEIDLAADTVLATLYAAKKYIVPHLARACVNFLETSLSAKNACVLLSQSCLFEEPDLTQRCWEVIDAQAELALKSEGFCDIDFQTLESILRRETLNAKEIVVFEAALNWAEVECQRQDLALSIENKRKVLGKALYLIRIPTMALDDFANGAAQSGVLTLNETNDIFLWYTAAKKPELQFVSKARKGLVPQRCHRFQSCAYRSNQWRYRGRCDSIQFAVDKRVFIAGFGLYGSSCGSAEYSAKIELKRQGVVLGQNLSKYFSDGSSNTFPVWFEYPVQIEPDTFYTASVILDGNELSYFGQEGMTEVQCGKVTVQFQCSSDSTNGTGVQGGQIPELIFYA.

One can recognise a BTB domain in the interval 120–190; that stretch reads ADVHFVVGPP…IYCDEIDLAA (71 aa). A BACK domain is found at 235–300; the sequence is FEEPDLTQRC…NWAEVECQRQ (66 aa).

In terms of tissue distribution, strongly expressed in the primary visual cortex.

It is found in the cytoplasm. The protein resides in the cytosol. Its subcellular location is the nucleus. Functionally, acts as a key regulator of dendritic field orientation during development of sensory cortex. Also directs dendrites toward active axon terminals when ectopically expressed. This chain is BTB/POZ domain-containing protein 3 (BTBD3), found in Callithrix jacchus (White-tufted-ear marmoset).